The following is a 360-amino-acid chain: Biotin synthase (360 aa).

Residues 1–21 (MTQLNIAPASTDTAAASNNNA) are disordered. Residues 62–289 (NTVQLSTLLS…RAMVRLSAGR (228 aa)) form the Radical SAM core domain. Residues cysteine 77, cysteine 81, and cysteine 84 each contribute to the [4Fe-4S] cluster site. 4 residues coordinate [2Fe-2S] cluster: cysteine 121, cysteine 152, cysteine 212, and arginine 284.

The protein belongs to the radical SAM superfamily. Biotin synthase family. As to quaternary structure, homodimer. [4Fe-4S] cluster is required as a cofactor. The cofactor is [2Fe-2S] cluster.

The enzyme catalyses (4R,5S)-dethiobiotin + (sulfur carrier)-SH + 2 reduced [2Fe-2S]-[ferredoxin] + 2 S-adenosyl-L-methionine = (sulfur carrier)-H + biotin + 2 5'-deoxyadenosine + 2 L-methionine + 2 oxidized [2Fe-2S]-[ferredoxin]. The protein operates within cofactor biosynthesis; biotin biosynthesis; biotin from 7,8-diaminononanoate: step 2/2. Its function is as follows. Catalyzes the conversion of dethiobiotin (DTB) to biotin by the insertion of a sulfur atom into dethiobiotin via a radical-based mechanism. In Paraburkholderia xenovorans (strain LB400), this protein is Biotin synthase.